The sequence spans 102 residues: NADH-quinone oxidoreductase subunit K (102 aa).

3 helical membrane passes run L5–L25, I31–F51, and L65–F85.

The protein belongs to the complex I subunit 4L family. As to quaternary structure, NDH-1 is composed of 14 different subunits. Subunits NuoA, H, J, K, L, M, N constitute the membrane sector of the complex.

The protein resides in the cell inner membrane. It carries out the reaction a quinone + NADH + 5 H(+)(in) = a quinol + NAD(+) + 4 H(+)(out). Its function is as follows. NDH-1 shuttles electrons from NADH, via FMN and iron-sulfur (Fe-S) centers, to quinones in the respiratory chain. The immediate electron acceptor for the enzyme in this species is believed to be ubiquinone. Couples the redox reaction to proton translocation (for every two electrons transferred, four hydrogen ions are translocated across the cytoplasmic membrane), and thus conserves the redox energy in a proton gradient. In Rhizobium johnstonii (strain DSM 114642 / LMG 32736 / 3841) (Rhizobium leguminosarum bv. viciae), this protein is NADH-quinone oxidoreductase subunit K.